A 199-amino-acid chain; its full sequence is Transcriptional regulatory protein EntR (199 aa).

Residues 3–124 (KILVIDRCHF…TLSHTIQEAL (122 aa)) form the Response regulatory domain. At Asp-8 the chain carries 4-aspartylphosphate. One can recognise an HTH luxR-type domain in the interval 133-198 (PKNATPLLTP…SPFLSLPGKG (66 aa)). Residues 157-176 (NNAIAAALSIHGKTVYTYKR) constitute a DNA-binding region (H-T-H motif).

Functionally, may serve to repress the entericidin locus in C.freundii. This Citrobacter freundii protein is Transcriptional regulatory protein EntR (ecnR).